The following is a 184-amino-acid chain: TRAF-interacting protein with FHA domain-containing protein A (184 aa).

T9 is subject to Phosphothreonine; by ALPK1. The region spanning 47-103 (VKFGRNSNICHYTFQDKQVSRVQFSLQLFKKFNSSVLSFEIKNMSKKTNLIVDSREL) is the FHA domain. A disordered region spans residues 165–184 (TYSLCSSQSSSPTEMDENES). Over residues 167–177 (SLCSSQSSSPT) the composition is skewed to polar residues.

Belongs to the TIFA family. Homooligomer; homooligomerizes following phosphorylation at Thr-9. Interacts with IRAK1, TRAF2 and TRAF6. Interacts with TIFAB; binding to TIFAB inhibits TRAF6 activation, possibly by inducing a conformational change in TIFA. Interacts with ZCCHC11; binding to ZCCHC11 suppresses the TRAF6-dependent activation of NF-kappa-B. Post-translationally, phosphorylated at Thr-9 following detection of ADP-D-glycero-beta-D-manno-heptose (ADP-Heptose) by ALPK1. Phosphorylation at Thr-9 by ALPK1 leads to the formation of an intermolecular binding between the FHA domain and phosphorylated Thr-9, promoting TIFA oligomerization and TIFA-mediated NF-kappa-B activation.

It is found in the cytoplasm. Adapter molecule that plays a key role in the activation of pro-inflammatory NF-kappa-B signaling following detection of bacterial pathogen-associated molecular pattern metabolites (PAMPs). Promotes activation of an innate immune response by inducing the oligomerization and polyubiquitination of TRAF6, which leads to the activation of TAK1 and IKK through a proteasome-independent mechanism. TIFA-dependent innate immune response is triggered by ADP-D-glycero-beta-D-manno-heptose (ADP-Heptose), a potent PAMP present in all Gram-negative and some Gram-positive bacteria: ADP-Heptose is recognized by ALPK1, which phosphorylates TIFA at Thr-9, leading to TIFA homooligomerization and subsequent activation of pro-inflammatory NF-kappa-B signaling. This chain is TRAF-interacting protein with FHA domain-containing protein A, found in Homo sapiens (Human).